Here is a 142-residue protein sequence, read N- to C-terminus: Hemoglobin subunit alpha (142 aa).

The region spanning 1 to 142 (GLTAADKTLI…VEKALFETYR (142 aa)) is the Globin domain. Histidine 59 contacts O2. Histidine 88 is a heme b binding site.

It belongs to the globin family. As to quaternary structure, heterotetramer of two alpha chains and two beta chains (an easy dimerization is also reported). Red blood cells.

In terms of biological role, involved in oxygen transport from the lung to the various peripheral tissues. The sequence is that of Hemoglobin subunit alpha (HBA) from Latimeria chalumnae (Coelacanth).